Consider the following 234-residue polypeptide: Ubiquitin carboxyl-terminal hydrolase 3 (234 aa).

The region spanning Arg12–Lys232 is the UCH catalytic domain. Cys101 (nucleophile) is an active-site residue. The Proton donor role is filled by His172.

The protein belongs to the peptidase C12 family.

The enzyme catalyses Thiol-dependent hydrolysis of ester, thioester, amide, peptide and isopeptide bonds formed by the C-terminal Gly of ubiquitin (a 76-residue protein attached to proteins as an intracellular targeting signal).. The sequence is that of Ubiquitin carboxyl-terminal hydrolase 3 from Arabidopsis thaliana (Mouse-ear cress).